The following is a 240-amino-acid chain: Acetoacetyl-CoA reductase (240 aa).

NADP(+) is bound by residues 18–20 (RGI) and 82–86 (NAGIT). Substrate-binding positions include Ser-134 and 141 to 144 (NVGQ). Residue Tyr-147 is the Proton acceptor of the active site. 177-180 (PGFI) contacts NADP(+). 178–179 (GF) serves as a coordination point for substrate.

Belongs to the short-chain dehydrogenases/reductases (SDR) family.

The catalysed reaction is a (3R)-3-hydroxyacyl-CoA + NADP(+) = a 3-oxoacyl-CoA + NADPH + H(+). It participates in biopolymer metabolism; poly-(R)-3-hydroxybutanoate biosynthesis. Its function is as follows. Catalyzes the reduction of acetoacetyl-CoA to (R)-3-hydroxybutyryl-CoA. When expressed in E.coli with Synechocystis PhaA, PhaC and PhaE confers the ability to synthesize up to 12% (w/w) poly(3-hydroxybutyrate) (PHB) depending on the carbon source. This is Acetoacetyl-CoA reductase from Synechocystis sp. (strain ATCC 27184 / PCC 6803 / Kazusa).